Here is an 89-residue protein sequence, read N- to C-terminus: Small ribosomal subunit protein uS19 (89 aa).

Belongs to the universal ribosomal protein uS19 family.

In terms of biological role, protein S19 forms a complex with S13 that binds strongly to the 16S ribosomal RNA. This is Small ribosomal subunit protein uS19 from Bacteroides fragilis (strain YCH46).